A 320-amino-acid chain; its full sequence is Cytochrome f (320 aa).

An N-terminal signal peptide occupies residues M1–A35. Heme-binding residues include Y36, C56, C59, and H60. Residues V286–K306 traverse the membrane as a helical segment.

Belongs to the cytochrome f family. In terms of assembly, the 4 large subunits of the cytochrome b6-f complex are cytochrome b6, subunit IV (17 kDa polypeptide, petD), cytochrome f and the Rieske protein, while the 4 small subunits are PetG, PetL, PetM and PetN. The complex functions as a dimer. It depends on heme as a cofactor.

It localises to the plastid. The protein resides in the chloroplast thylakoid membrane. In terms of biological role, component of the cytochrome b6-f complex, which mediates electron transfer between photosystem II (PSII) and photosystem I (PSI), cyclic electron flow around PSI, and state transitions. The chain is Cytochrome f from Piper cenocladum (Ant piper).